A 623-amino-acid polypeptide reads, in one-letter code: Arginine--tRNA ligase (623 aa).

The 'HIGH' region motif lies at 116–126; sequence ANPIHPLHVGH.

Belongs to the class-I aminoacyl-tRNA synthetase family.

It is found in the cytoplasm. It carries out the reaction tRNA(Arg) + L-arginine + ATP = L-arginyl-tRNA(Arg) + AMP + diphosphate. The protein is Arginine--tRNA ligase of Sulfurisphaera tokodaii (strain DSM 16993 / JCM 10545 / NBRC 100140 / 7) (Sulfolobus tokodaii).